The primary structure comprises 206 residues: Protein SUE1, mitochondrial (206 aa).

The N-terminal 24 residues, 1-24, are a transit peptide targeting the mitochondrion; that stretch reads MILLKRTKIRGVSVSFVSLQRRTH.

It is found in the mitochondrion envelope. In terms of biological role, required for degradation of unstable forms of cytochrome c. The protein is Protein SUE1, mitochondrial of Saccharomyces cerevisiae (strain ATCC 204508 / S288c) (Baker's yeast).